Here is a 236-residue protein sequence, read N- to C-terminus: 2,3,4,5-tetrahydropyridine-2,6-dicarboxylate N-acetyltransferase (236 aa).

This sequence belongs to the transferase hexapeptide repeat family. DapH subfamily.

It catalyses the reaction (S)-2,3,4,5-tetrahydrodipicolinate + acetyl-CoA + H2O = L-2-acetamido-6-oxoheptanedioate + CoA. It functions in the pathway amino-acid biosynthesis; L-lysine biosynthesis via DAP pathway; LL-2,6-diaminopimelate from (S)-tetrahydrodipicolinate (acetylase route): step 1/3. Catalyzes the transfer of an acetyl group from acetyl-CoA to tetrahydrodipicolinate. This is 2,3,4,5-tetrahydropyridine-2,6-dicarboxylate N-acetyltransferase from Listeria ivanovii.